Reading from the N-terminus, the 434-residue chain is MALQTTNTWETLAQLLPSRNHDQDFWWKVTGRQLAVLLEAAGYPIERQYNTLLFHYHWAIPYLGPAPASGVAKWPSQLSVDGSPIEYSWKWNTKSKAPDVRYTMEPMSEFTGTKLDPLNQRAFRELLHKLSQFVPDVDLAPTDYFMSTLFDHDRSVLMKAVDDGVPLQFSSTALAFEFLDKGLLLKTYYAPRKLETGHFVLKDWDTAIRGYYPESKALDIVYEFLKTSPEGELMNPYHLAVDNVKDGRLKFYFQSPHRTFTSVREILTIGGRVQREGLEEQLLSLRDLLNALTGQSPDFPEDGEPPIVEEDVTADLDTDGHPELMSGYLYYFDIAPGAALPEIRFYVPIRRYCKSDLDLAQSLTAWMAANGRGTYCQQYLDLVHSLAEHREISKDRGLQRYIACLLAKNGEIEVTTYLAPETYEQVRRSQKTAV.

Glu-86 is a binding site for L-tryptophan. Arg-101, Arg-248, Lys-250, Tyr-252, and Tyr-346 together coordinate substrate.

The protein belongs to the tryptophan dimethylallyltransferase family.

Its pathway is secondary metabolite biosynthesis. Its function is as follows. Prenyltransferase; part of the gene cluster that mediates the biosynthesis of flavoglaucin and congeners (including aspergin, dihydroauroglaucin and auroglaucin), prenylated salicylaldehyde derivatives carrying a saturated or an unsaturated C-7 side chain. The PKS fogA releases the carboxylic acid (8E,10E,12E)-3,5,7-trihydroxytetradeca-8,10,12-trienoic acid as its product, as well as derivatives with one and two double bonds. FogA is indeed able to reduce the initial triketide, thus being at least partially responsible for the differently saturated heptyl side chains of flavoglaucin congeners. The oxidoreductases fogB, fogC and fogD modify the nascent polyketide in fogA-bound form and, together, fogA, fogB, fogC and fogD are necessary for the formation of the aromatic core and the cyclized PKS products are released as salicyl alcohols. In particular, fogB is responsible for oxidation of a hydroxyl group or reduction of remaining double bond(s) at the C-7 residue whereas fogD is probably involved in the reductive release of the modified PKS products. The cytochrome P450 monooxygenase fogE is then responsible for the hydroxylation at C-3 of the benzene ring. The fogE products are substrates of the prenyltransferase fogH and the prenylated benzyl alcohols are subsequently oxidized by the fogF to produce the final aryl aldehydes flavoglaucin and congeners. The short-chain dehydrogenase fogG does not seem to be involved in the biosynthesis of the prenylated salicylaldehyde derivatives. The polypeptide is Prenyltransferase fogH (Aspergillus ruber (strain CBS 135680)).